The following is a 198-amino-acid chain: dITP/XTP pyrophosphatase (198 aa).

S10–K15 serves as a coordination point for substrate. Mg(2+)-binding residues include E43 and D72. Residue D72 is the Proton acceptor of the active site. Residues S73, F154–D157, K177, and H182–R183 each bind substrate.

Belongs to the HAM1 NTPase family. As to quaternary structure, homodimer. Mg(2+) serves as cofactor.

It carries out the reaction XTP + H2O = XMP + diphosphate + H(+). The enzyme catalyses dITP + H2O = dIMP + diphosphate + H(+). The catalysed reaction is ITP + H2O = IMP + diphosphate + H(+). Functionally, pyrophosphatase that catalyzes the hydrolysis of nucleoside triphosphates to their monophosphate derivatives, with a high preference for the non-canonical purine nucleotides XTP (xanthosine triphosphate), dITP (deoxyinosine triphosphate) and ITP. Seems to function as a house-cleaning enzyme that removes non-canonical purine nucleotides from the nucleotide pool, thus preventing their incorporation into DNA/RNA and avoiding chromosomal lesions. In Leptospira biflexa serovar Patoc (strain Patoc 1 / Ames), this protein is dITP/XTP pyrophosphatase.